The primary structure comprises 473 residues: Chromosomal replication initiator protein DnaA (473 aa).

The interval 1 to 76 is domain I, interacts with DnaA modulators; that stretch reads MNYHSTNVNE…RTVLGRVIGP (76 aa). The domain II stretch occupies residues 76 to 135; sequence PNASLQYNALVDNSSPKYPGTVTLAGCADGGQAAEQFDVNLLHRHMPNAATHSEAQDFDT. A domain III, AAA+ region region spans residues 136-353; it reads QLNSRLNFRN…GTLVSLITNS (218 aa). Residues Gly181, Gly183, Lys184, and Thr185 each contribute to the ATP site. The tract at residues 354 to 473 is domain IV, binds dsDNA; it reads VVVGKEIDLT…VERAEQLIAN (120 aa).

Belongs to the DnaA family. In terms of assembly, oligomerizes as a right-handed, spiral filament on DNA at oriC.

It localises to the cytoplasm. Its function is as follows. Plays an essential role in the initiation and regulation of chromosomal replication. ATP-DnaA binds to the origin of replication (oriC) to initiate formation of the DNA replication initiation complex once per cell cycle. Binds the DnaA box (a 9 base pair repeat at the origin) and separates the double-stranded (ds)DNA. Forms a right-handed helical filament on oriC DNA; dsDNA binds to the exterior of the filament while single-stranded (ss)DNA is stabiized in the filament's interior. The ATP-DnaA-oriC complex binds and stabilizes one strand of the AT-rich DNA unwinding element (DUE), permitting loading of DNA polymerase. After initiation quickly degrades to an ADP-DnaA complex that is not apt for DNA replication. Binds acidic phospholipids. The protein is Chromosomal replication initiator protein DnaA of Porphyromonas gingivalis (strain ATCC 33277 / DSM 20709 / CIP 103683 / JCM 12257 / NCTC 11834 / 2561).